Reading from the N-terminus, the 259-residue chain is Adenosylcobinamide-GDP ribazoletransferase (259 aa).

Transmembrane regions (helical) follow at residues 43–63 (LAGA…LGLG), 64–84 (ASSM…TGAL), 116–136 (FGVL…ASLV), 141–161 (PINV…LMVW), and 185–205 (TLYT…APVT).

Belongs to the CobS family. Mg(2+) is required as a cofactor.

The protein localises to the cell inner membrane. The catalysed reaction is alpha-ribazole + adenosylcob(III)inamide-GDP = adenosylcob(III)alamin + GMP + H(+). It carries out the reaction alpha-ribazole 5'-phosphate + adenosylcob(III)inamide-GDP = adenosylcob(III)alamin 5'-phosphate + GMP + H(+). It functions in the pathway cofactor biosynthesis; adenosylcobalamin biosynthesis; adenosylcobalamin from cob(II)yrinate a,c-diamide: step 7/7. In terms of biological role, joins adenosylcobinamide-GDP and alpha-ribazole to generate adenosylcobalamin (Ado-cobalamin). Also synthesizes adenosylcobalamin 5'-phosphate from adenosylcobinamide-GDP and alpha-ribazole 5'-phosphate. The protein is Adenosylcobinamide-GDP ribazoletransferase of Allorhizobium ampelinum (strain ATCC BAA-846 / DSM 112012 / S4) (Agrobacterium vitis (strain S4)).